The following is a 665-amino-acid chain: Cysteine-rich receptor-like protein kinase 41 (665 aa).

The first 27 residues, 1-27 (MTSSCSLSRPQHLFFFFFLFVPFLSLG), serve as a signal peptide directing secretion. The Extracellular segment spans residues 28–280 (QQISVDINSA…DPKPGNDKVK (253 aa)). 2 consecutive Gnk2-homologous domains span residues 42-148 (PSNP…DKPI) and 154-260 (TSPV…SDLR). 3 N-linked (GlcNAc...) asparagine glycosylation sites follow: Asn-120, Asn-165, and Asn-236. The helical transmembrane segment at 281–301 (IIIATVCSVIGFAIIAVFLYF) threads the bilayer. The Cytoplasmic segment spans residues 302-665 (FMTRNRRTAK…DVTITEFDAR (364 aa)). The region spanning 344 to 624 (FSRDNQLGEG…VVMLNANSFT (281 aa)) is the Protein kinase domain. Residues 350-358 (LGEGGFGAV) and Lys-372 contribute to the ATP site. The residue at position 417 (Tyr-417) is a Phosphotyrosine. The Proton acceptor role is filled by Asp-469. Ser-473 carries the phosphoserine modification. Thr-511 carries the phosphothreonine modification. Tyr-519 bears the Phosphotyrosine mark.

It belongs to the protein kinase superfamily. Ser/Thr protein kinase family. CRK subfamily.

The protein resides in the membrane. It carries out the reaction L-seryl-[protein] + ATP = O-phospho-L-seryl-[protein] + ADP + H(+). The enzyme catalyses L-threonyl-[protein] + ATP = O-phospho-L-threonyl-[protein] + ADP + H(+). This Arabidopsis thaliana (Mouse-ear cress) protein is Cysteine-rich receptor-like protein kinase 41 (CRK41).